A 55-amino-acid polypeptide reads, in one-letter code: Large ribosomal subunit protein bL33 (55 aa).

Belongs to the bacterial ribosomal protein bL33 family.

The sequence is that of Large ribosomal subunit protein bL33 from Mycobacterium leprae (strain Br4923).